A 253-amino-acid polypeptide reads, in one-letter code: 3-dehydroquinate dehydratase (253 aa).

3-dehydroquinate is bound by residues 46–48 (EWR) and R82. H143 (proton donor/acceptor) is an active-site residue. The active-site Schiff-base intermediate with substrate is the K170. Positions 213, 232, and 236 each coordinate 3-dehydroquinate.

The protein belongs to the type-I 3-dehydroquinase family. In terms of assembly, homodimer.

It catalyses the reaction 3-dehydroquinate = 3-dehydroshikimate + H2O. It participates in metabolic intermediate biosynthesis; chorismate biosynthesis; chorismate from D-erythrose 4-phosphate and phosphoenolpyruvate: step 3/7. Its activity is regulated as follows. Inhibited by flavonoids such as datiscetin, naringenin, marein and phloretin. Functionally, involved in the third step of the chorismate pathway, which leads to the biosynthesis of aromatic amino acids (AroAA). Catalyzes the cis-dehydration of 3-dehydroquinate (DHQ) and introduces the first double bond of the aromatic ring to yield 3-dehydroshikimate. The reaction involves the formation of an imine intermediate between the keto group of 3-dehydroquinate and the epsilon-amino group of Lys-170 at the active site. This is 3-dehydroquinate dehydratase from Enterococcus faecalis (strain ATCC 700802 / V583).